A 276-amino-acid polypeptide reads, in one-letter code: Release factor glutamine methyltransferase (276 aa).

Residues Gly116 to Gly120, Asp139, Trp167, and Asn182 each bind S-adenosyl-L-methionine. Position 182–185 (Asn182–Tyr185) interacts with substrate.

Belongs to the protein N5-glutamine methyltransferase family. PrmC subfamily.

The catalysed reaction is L-glutaminyl-[peptide chain release factor] + S-adenosyl-L-methionine = N(5)-methyl-L-glutaminyl-[peptide chain release factor] + S-adenosyl-L-homocysteine + H(+). Methylates the class 1 translation termination release factors RF1/PrfA and RF2/PrfB on the glutamine residue of the universally conserved GGQ motif. The sequence is that of Release factor glutamine methyltransferase from Pseudomonas aeruginosa (strain ATCC 15692 / DSM 22644 / CIP 104116 / JCM 14847 / LMG 12228 / 1C / PRS 101 / PAO1).